A 1073-amino-acid polypeptide reads, in one-letter code: Probable inorganic carbon transporter subunit DabA (1073 aa).

4 residues coordinate Zn(2+): C551, D553, H742, and C757.

It belongs to the inorganic carbon transporter (TC 9.A.2) DabA family. Forms a complex with DabB. The cofactor is Zn(2+).

Its subcellular location is the cell inner membrane. Functionally, part of an energy-coupled inorganic carbon pump. The chain is Probable inorganic carbon transporter subunit DabA from Methylococcus capsulatus (strain ATCC 33009 / NCIMB 11132 / Bath).